We begin with the raw amino-acid sequence, 612 residues long: Amyloid-beta precursor-like protein (612 aa).

Positions 1–21 (MGPSVRPGFLVVVIGLQFVAA) are cleaved as a signal peptide. Residues 22–542 (SMEVNSRKFE…NLYANSHANS (521 aa)) lie on the Extracellular side of the membrane. The interval 28-122 (RKFEPMVAFI…PFRCLVGPFQ (95 aa)) is GFLD subdomain. Residues 28–189 (RKFEPMVAFI…SGVEFVCCPK (162 aa)) enclose the E1 domain. Cystine bridges form between C38-C60, C71-C116, C96-C103, C132-C187, C143-C173, and C157-C186. N-linked (GlcNAc...) asparagine glycosylation is found at N99, N108, and N150. A cuBD subdomain region spans residues 130–189 (EHCIFDHYHDPRVCNEFDQCNETAMSKCSARGMTTQSFAMLWPCQEPGHFSGVEFVCCPK). The region spanning 223–419 (GDSKYMSKYA…KQVRPNIDKF (197 aa)) is the E2 domain. Disordered regions lie at residues 251-276 (ERDT…TDPK) and 437-490 (QEPT…FDSE). Basic and acidic residues-rich tracts occupy residues 439 to 453 (PTPK…KAED) and 470 to 483 (KPTE…EDIK). A helical membrane pass occupies residues 543–563 (VLGIAIGGVVVFIIIVVAVVM). Topologically, residues 564–612 (LKRRTQRQRVTHGFVEVDPAASPEERHVANMQMSGYENPTYKYFEMQNQ) are cytoplasmic. The segment at 598 to 612 (GYENPTYKYFEMQNQ) is required for the interaction with kinesin heavy chain and for anterograde transport in axons. A YENPXY motif motif is present at residues 599–604 (YENPTY).

Belongs to the APP family. As to quaternary structure, interacts (via cytoplasmic domain) with kinesin heavy chain. In terms of tissue distribution, expressed in the cervicothoracic ganglion (stellate ganglion) (at protein level).

The protein localises to the cell membrane. It is found in the cell projection. Its subcellular location is the axon. Functionally, acts as a kinesin I membrane receptor, thereby playing a role in axonal anterograde transport of cargo towards synapses in axons. In Doryteuthis pealeii (Longfin inshore squid), this protein is Amyloid-beta precursor-like protein.